The chain runs to 54 residues: ATP synthase F(0) complex subunit 8 (54 aa).

The chain crosses the membrane as a helical span at residues 13–35 (ALSLWVCFPLMMLSLSSFLPLTL).

Belongs to the ATPase protein 8 family. Component of the ATP synthase complex composed at least of ATP5F1A/subunit alpha, ATP5F1B/subunit beta, ATP5MC1/subunit c (homooctomer), MT-ATP6/subunit a, MT-ATP8/subunit 8, ATP5ME/subunit e, ATP5MF/subunit f, ATP5MG/subunit g, ATP5MK/subunit k, ATP5MJ/subunit j, ATP5F1C/subunit gamma, ATP5F1D/subunit delta, ATP5F1E/subunit epsilon, ATP5PF/subunit F6, ATP5PB/subunit b, ATP5PD/subunit d, ATP5PO/subunit OSCP. ATP synthase complex consists of a soluble F(1) head domain (subunits alpha(3) and beta(3)) - the catalytic core - and a membrane F(0) domain - the membrane proton channel (subunits c, a, 8, e, f, g, k and j). These two domains are linked by a central stalk (subunits gamma, delta, and epsilon) rotating inside the F1 region and a stationary peripheral stalk (subunits F6, b, d, and OSCP).

It is found in the mitochondrion membrane. Its function is as follows. Subunit 8, of the mitochondrial membrane ATP synthase complex (F(1)F(0) ATP synthase or Complex V) that produces ATP from ADP in the presence of a proton gradient across the membrane which is generated by electron transport complexes of the respiratory chain. ATP synthase complex consist of a soluble F(1) head domain - the catalytic core - and a membrane F(1) domain - the membrane proton channel. These two domains are linked by a central stalk rotating inside the F(1) region and a stationary peripheral stalk. During catalysis, ATP synthesis in the catalytic domain of F(1) is coupled via a rotary mechanism of the central stalk subunits to proton translocation. In vivo, can only synthesize ATP although its ATP hydrolase activity can be activated artificially in vitro. Part of the complex F(0) domain. This chain is ATP synthase F(0) complex subunit 8, found in Myxine glutinosa (Atlantic hagfish).